The following is a 510-amino-acid chain: Crotonobetaine/carnitine--CoA ligase (510 aa).

The protein belongs to the ATP-dependent AMP-binding enzyme family.

The enzyme catalyses 4-(trimethylamino)butanoate + ATP + CoA = 4-(trimethylamino)butanoyl-CoA + AMP + diphosphate. It carries out the reaction crotonobetaine + ATP + CoA = crotonobetainyl-CoA + AMP + diphosphate. The catalysed reaction is (R)-carnitine + ATP + CoA = (R)-carnitinyl-CoA + AMP + diphosphate. It participates in amine and polyamine metabolism; carnitine metabolism. In terms of biological role, catalyzes the transfer of CoA to carnitine, generating the initial carnitinyl-CoA needed for the CaiB reaction cycle. Also has activity toward crotonobetaine and gamma-butyrobetaine. The sequence is that of Crotonobetaine/carnitine--CoA ligase from Shigella flexneri serotype 5b (strain 8401).